A 209-amino-acid chain; its full sequence is Large ribosomal subunit protein bL25 (209 aa).

It belongs to the bacterial ribosomal protein bL25 family. CTC subfamily. As to quaternary structure, part of the 50S ribosomal subunit; part of the 5S rRNA/L5/L18/L25 subcomplex. Contacts the 5S rRNA. Binds to the 5S rRNA independently of L5 and L18.

In terms of biological role, this is one of the proteins that binds to the 5S RNA in the ribosome where it forms part of the central protuberance. This Xanthomonas campestris pv. campestris (strain 8004) protein is Large ribosomal subunit protein bL25.